A 466-amino-acid chain; its full sequence is MALLTAAARLFGAKNASCLVLAARHASASSTNLKDILADLIPKEQTRVKAFRQQHGKTVVGQITVDMMYGGMRGMKGLVYETSVLDPDEGIRFRGYSIPECQKLLPKAKGGEEPLPEGLFWLLVTGQIPTEEQVSWLSQEWAKRAALPSHVVTMLDNFPTNLHPMSQLSAAVTALNSESTFARAYSEGINRTKYWELIYEDSMDLIAKLPCVAAKIYRNLYREGSSIGAIDPKLDWSHNFTNMLGYTDAQFTELMRLYLTIHSDHEGGNVSAHTSHLVGSALSDPYLSFAAAMNGLAGPLHGLANQEVLVWLTQLQKEVGKDVSDEKLRDYIWNTLNSGRVVPGYGHAVLRKTDPRYTCQREFALKHLPQDPMFKLVAQLYKIVPNILLEQGKAKNPWPNVDAHSGVLLQYYGMTEMNYYTVLFGVSRALGVLAQLIWSRALGFPLERPKSMSTDGLMKFVDSKSG.

A mitochondrion-targeting transit peptide spans 1–27; it reads MALLTAAARLFGAKNASCLVLAARHAS. Residues 2–21 carry the SIFI-degron motif; it reads ALLTAAARLFGAKNASCLVL. Residue K57 is modified to N6-succinyllysine. The residue at position 76 (K76) is an N6-acetyllysine; alternate. K76 is modified (N6-succinyllysine; alternate). N6-succinyllysine is present on residues K103 and K193. Phosphoserine is present on S226. H301 is a catalytic residue. An N6-acetyllysine; alternate mark is found at K321 and K327. Residues K321 and K327 each carry the N6-succinyllysine; alternate modification. Residue H347 is part of the active site. Oxaloacetate is bound at residue R356. K375 carries the N6-acetyllysine; alternate modification. K375 bears the N6-succinyllysine; alternate mark. At K382 the chain carries N6-acetyllysine. Position 393 is an N6-acetyllysine; alternate (K393). N6-succinyllysine; alternate is present on K393. K395 carries the N6,N6,N6-trimethyllysine modification. Residue D402 is part of the active site. Oxaloacetate contacts are provided by R428 and R448. K450 is subject to N6-succinyllysine. K459 carries the N6-acetyllysine; alternate modification. At K459 the chain carries N6-succinyllysine; alternate.

This sequence belongs to the citrate synthase family. As to quaternary structure, homodimer. In terms of processing, methylated. Trimethylation at Lys-395 by CSKMT decreases citrate synthase activity. Post-translationally, in response to mitochondrial stress, the precursor protein is ubiquitinated by the SIFI complex in the cytoplasm before mitochondrial import, leading to its degradation. Within the SIFI complex, UBR4 initiates ubiquitin chain that are further elongated or branched by KCMF1.

Its subcellular location is the mitochondrion matrix. The catalysed reaction is oxaloacetate + acetyl-CoA + H2O = citrate + CoA + H(+). The protein operates within carbohydrate metabolism; tricarboxylic acid cycle; isocitrate from oxaloacetate: step 1/2. In terms of biological role, key enzyme of the Krebs tricarboxylic acid cycle which catalyzes the synthesis of citrate from acetyl coenzyme A and oxaloacetate. This Bos taurus (Bovine) protein is Citrate synthase, mitochondrial (CS).